We begin with the raw amino-acid sequence, 262 residues long: Small ribosomal subunit protein uS2 (262 aa).

Belongs to the universal ribosomal protein uS2 family.

The sequence is that of Small ribosomal subunit protein uS2 from Roseiflexus sp. (strain RS-1).